A 276-amino-acid chain; its full sequence is Potassium/proton antiporter CemA (276 aa).

The next 3 helical transmembrane spans lie at 59–79 (LLLL…WIFG), 199–219 (FFII…GWEV), and 236–256 (FIFL…KYWI).

The protein belongs to the CemA family.

It is found in the plastid. It localises to the chloroplast inner membrane. It catalyses the reaction K(+)(in) + H(+)(out) = K(+)(out) + H(+)(in). Contributes to K(+)/H(+) antiport activity by supporting proton efflux to control proton extrusion and homeostasis in chloroplasts in a light-dependent manner to modulate photosynthesis. Prevents excessive induction of non-photochemical quenching (NPQ) under continuous-light conditions. Indirectly promotes efficient inorganic carbon uptake into chloroplasts. This is Potassium/proton antiporter CemA from Cyanidioschyzon merolae (strain NIES-3377 / 10D) (Unicellular red alga).